We begin with the raw amino-acid sequence, 901 residues long: Glutamate receptor 2.1 (901 aa).

A signal peptide spans 1–25; sequence MKRENNLVLSLLFFVIVFLMQVGEA. The Extracellular portion of the chain corresponds to 26–574; sequence QNRITNVNVG…SSTIFLMPLT (549 aa). 9 N-linked (GlcNAc...) asparagine glycosylation sites follow: N46, N53, N204, N267, N331, N342, N461, N477, and N536. A helical membrane pass occupies residues 575–595; sequence LALWLISLLSFFIIGLVVWVL. The Cytoplasmic portion of the chain corresponds to 596-604; that stretch reads EHRVNPDFD. Residues 605 to 625 form a helical membrane-spanning segment; sequence GPGQYQLSTIFWFSFSIMVFA. Residues 626–629 are Cytoplasmic-facing; the sequence is PRER. The helical transmembrane segment at 630-650 threads the bilayer; it reads VLSFWARVVVIIWYFLVLVLT. Topologically, residues 651–823 are extracellular; the sequence is QSYTASLASL…VSFRQLGFDS (173 aa). The helical transmembrane segment at 824–844 threads the bilayer; sequence FWVLFLVAAIVCTMALLKFVY. Topologically, residues 845–901 are cytoplasmic; that stretch reads QFLKENPNQRNLRVLWEKFNEPDQKSYIKDVTKCQCSSGQGMPKNGQEGANAVNNGN.

The protein belongs to the glutamate-gated ion channel (TC 1.A.10.1) family. May form heteromers. Expressed predominantly in roots. First strongly detected in all cell types of the root except at the apex. Later expressed at the root-shoot junction.

Its subcellular location is the membrane. Functionally, glutamate-gated receptor that probably acts as a non-selective cation channel. May be involved in light-signal transduction and calcium homeostasis via the regulation of calcium influx into cells. The chain is Glutamate receptor 2.1 (GLR2.1) from Arabidopsis thaliana (Mouse-ear cress).